Reading from the N-terminus, the 205-residue chain is Large ribosomal subunit protein uL4 (205 aa).

The disordered stretch occupies residues 45–97; sequence RQGTSAVKNRSAVRGGGKKPWRQKGTGRARQGSIRAPQWRGGGTVFGPTPRSY. Positions 60–71 are enriched in basic residues; sequence GGKKPWRQKGTG.

The protein belongs to the universal ribosomal protein uL4 family. As to quaternary structure, part of the 50S ribosomal subunit.

Functionally, one of the primary rRNA binding proteins, this protein initially binds near the 5'-end of the 23S rRNA. It is important during the early stages of 50S assembly. It makes multiple contacts with different domains of the 23S rRNA in the assembled 50S subunit and ribosome. Its function is as follows. Forms part of the polypeptide exit tunnel. The protein is Large ribosomal subunit protein uL4 of Lactobacillus gasseri (strain ATCC 33323 / DSM 20243 / BCRC 14619 / CIP 102991 / JCM 1131 / KCTC 3163 / NCIMB 11718 / NCTC 13722 / AM63).